The chain runs to 226 residues: ATP synthase F(0) complex subunit a (226 aa).

6 helical membrane passes run 6 to 26, 68 to 88, 97 to 117, 138 to 158, 164 to 184, and 193 to 213; these read FATFITPTILGITTLPIIMLF, WALMLMSLILFIASTNLLGLL, QLSMNIGMAIPLWLATVLMGF, VPMLIIIETISLFIQPVALAV, ITAGHLLIHLIGSATLALCSI, and FIILFLLTILELAVAMIQAYV.

It belongs to the ATPase A chain family. Component of the ATP synthase complex composed at least of ATP5F1A/subunit alpha, ATP5F1B/subunit beta, ATP5MC1/subunit c (homooctomer), MT-ATP6/subunit a, MT-ATP8/subunit 8, ATP5ME/subunit e, ATP5MF/subunit f, ATP5MG/subunit g, ATP5MK/subunit k, ATP5MJ/subunit j, ATP5F1C/subunit gamma, ATP5F1D/subunit delta, ATP5F1E/subunit epsilon, ATP5PF/subunit F6, ATP5PB/subunit b, ATP5PD/subunit d, ATP5PO/subunit OSCP. ATP synthase complex consists of a soluble F(1) head domain (subunits alpha(3) and beta(3)) - the catalytic core - and a membrane F(0) domain - the membrane proton channel (subunits c, a, 8, e, f, g, k and j). These two domains are linked by a central stalk (subunits gamma, delta, and epsilon) rotating inside the F1 region and a stationary peripheral stalk (subunits F6, b, d, and OSCP). Interacts with DNAJC30; interaction is direct.

Its subcellular location is the mitochondrion inner membrane. It carries out the reaction H(+)(in) = H(+)(out). Its function is as follows. Subunit a, of the mitochondrial membrane ATP synthase complex (F(1)F(0) ATP synthase or Complex V) that produces ATP from ADP in the presence of a proton gradient across the membrane which is generated by electron transport complexes of the respiratory chain. ATP synthase complex consist of a soluble F(1) head domain - the catalytic core - and a membrane F(1) domain - the membrane proton channel. These two domains are linked by a central stalk rotating inside the F(1) region and a stationary peripheral stalk. During catalysis, ATP synthesis in the catalytic domain of F(1) is coupled via a rotary mechanism of the central stalk subunits to proton translocation. With the subunit c (ATP5MC1), forms the proton-conducting channel in the F(0) domain, that contains two crucial half-channels (inlet and outlet) that facilitate proton movement from the mitochondrial intermembrane space (IMS) into the matrix. Protons are taken up via the inlet half-channel and released through the outlet half-channel, following a Grotthuss mechanism. This Osphranter robustus (Wallaroo) protein is ATP synthase F(0) complex subunit a.